The chain runs to 235 residues: Peptidase E (235 aa).

Catalysis depends on charge relay system residues serine 122, aspartate 137, and histidine 159.

Belongs to the peptidase S51 family.

The protein resides in the cytoplasm. It carries out the reaction Dipeptidase E catalyzes the hydrolysis of dipeptides Asp-|-Xaa. It does not act on peptides with N-terminal Glu, Asn or Gln, nor does it cleave isoaspartyl peptides.. Functionally, hydrolyzes dipeptides containing N-terminal aspartate residues. May play a role in allowing the cell to use peptide aspartate to spare carbon otherwise required for the synthesis of the aspartate family of amino acids. This chain is Peptidase E, found in Shewanella amazonensis (strain ATCC BAA-1098 / SB2B).